A 1029-amino-acid polypeptide reads, in one-letter code: U2 snRNP-associated SURP motif-containing protein (1029 aa).

Disordered regions lie at residues 1-111 and 141-274; these read MADK…EDEK and VNAA…PSTT. Ala-2 is modified (N-acetylalanine). Residues 7 to 16 show a composition bias toward polar residues; sequence GGSQKASSKT. Over residues 45–54 the composition is skewed to basic residues; that stretch reads TRPKSPRKHN. Positions 55 to 64 are enriched in basic and acidic residues; sequence YRNESARESL. Residue Ser-67 is modified to Phosphoserine. A Glycyl lysine isopeptide (Lys-Gly) (interchain with G-Cter in SUMO2) cross-link involves residue Lys-80. Residues 92–121 are a coiled coil; the sequence is AKRTLSKKEQEELKKKEDEKAAAEIYEEFL. Composition is skewed to basic and acidic residues over residues 97-111 and 144-155; these read SKKE…EDEK and AKEEHETDEKRG. Glycyl lysine isopeptide (Lys-Gly) (interchain with G-Cter in SUMO2) cross-links involve residues Lys-145 and Lys-168. Residues 169–178 are compositionally biased toward polar residues; that stretch reads NPPNQSSNER. The span at 186–222 shows a compositional bias: basic and acidic residues; the sequence is ETKKPPLKKGEKEKKKSNLELFKEELKQIQEERDERH. Residues 192-232 adopt a coiled-coil conformation; that stretch reads LKKGEKEKKKSNLELFKEELKQIQEERDERHKTKGRLSRFE. At Ser-202 the chain carries Phosphoserine. Residue Lys-208 forms a Glycyl lysine isopeptide (Lys-Gly) (interchain with G-Cter in SUMO2) linkage. Ser-236 carries the phosphoserine modification. The span at 239–249 shows a compositional bias: basic and acidic residues; it reads DGQRRSMDAPS. The RRM domain occupies 274–355; sequence TNLYLGNINP…FEMKLGWGKA (82 aa). The stretch at 430–473 is one SURP motif repeat; it reads LIHRMIEFVVREGPMFEAMIMNREINNPMFRFLFENQTPAHVYY. At Ser-485 the chain carries Phosphoserine. The 146-residue stretch at 534 to 679 folds into the CID domain; sequence LKEEQRDKLE…KLQNIFLGLV (146 aa). Thr-719 is modified (phosphothreonine). Residues Lys-748 and Lys-749 each participate in a glycyl lysine isopeptide (Lys-Gly) (interchain with G-Cter in SUMO2) cross-link. Position 760 is an N6-acetyllysine; alternate (Lys-760). A Glycyl lysine isopeptide (Lys-Gly) (interchain with G-Cter in SUMO2); alternate cross-link involves residue Lys-760. Disordered regions lie at residues 778-841 and 855-1029; these read KWEL…EEKR and QDEL…KNKH. Over residues 786-806 the composition is skewed to acidic residues; the sequence is EESEEEENQNQEEESEDEEDT. Ser-788, Ser-800, and Ser-811 each carry phosphoserine. 2 stretches are compositionally biased toward basic and acidic residues: residues 810–841 and 874–922; these read KSEE…EEKR and QVEH…TPTR. Glycyl lysine isopeptide (Lys-Gly) (interchain with G-Cter in SUMO2) cross-links involve residues Lys-822, Lys-829, and Lys-832. A coiled-coil region spans residues 837–915; sequence SEEKRAKLRE…ESRSKDKKEK (79 aa). Position 931 is a phosphothreonine (Thr-931). 2 positions are modified to phosphoserine: Ser-946 and Ser-948. Basic and acidic residues predominate over residues 950 to 980; the sequence is KSERSERSERSHKESSRSRSSHKDSPRDVSK. Positions 991–1029 are enriched in basic residues; it reads TPKRSRRSRSRSPKKSGKKSRSQSRSPHRSHKKSKKNKH.

The protein belongs to the splicing factor SR family. In terms of assembly, interacts with ERBB4.

Its subcellular location is the nucleus. In Homo sapiens (Human), this protein is U2 snRNP-associated SURP motif-containing protein (U2SURP).